Reading from the N-terminus, the 386-residue chain is Methylthioribose-1-phosphate isomerase (386 aa).

The active-site Proton donor is D255.

Belongs to the eIF-2B alpha/beta/delta subunits family. MtnA subfamily.

It is found in the cytoplasm. The protein localises to the nucleus. It catalyses the reaction 5-(methylsulfanyl)-alpha-D-ribose 1-phosphate = 5-(methylsulfanyl)-D-ribulose 1-phosphate. It participates in amino-acid biosynthesis; L-methionine biosynthesis via salvage pathway; L-methionine from S-methyl-5-thio-alpha-D-ribose 1-phosphate: step 1/6. Functionally, catalyzes the interconversion of methylthioribose-1-phosphate (MTR-1-P) into methylthioribulose-1-phosphate (MTRu-1-P). This is Methylthioribose-1-phosphate isomerase from Trypanosoma brucei brucei (strain 927/4 GUTat10.1).